Consider the following 498-residue polypeptide: Glycerol kinase (498 aa).

Residue Thr12 coordinates ADP. ATP is bound by residues Thr12, Thr13, and Ser14. Thr12 is a sn-glycerol 3-phosphate binding site. Arg16 is a binding site for ADP. Positions 82, 83, 134, and 243 each coordinate sn-glycerol 3-phosphate. Glycerol-binding residues include Arg82, Glu83, Tyr134, Asp243, and Gln244. Positions 265 and 308 each coordinate ADP. Thr265, Gly308, Gln312, and Gly409 together coordinate ATP. ADP contacts are provided by Gly409 and Asn413.

Belongs to the FGGY kinase family. As to quaternary structure, homotetramer and homodimer (in equilibrium).

It catalyses the reaction glycerol + ATP = sn-glycerol 3-phosphate + ADP + H(+). It participates in polyol metabolism; glycerol degradation via glycerol kinase pathway; sn-glycerol 3-phosphate from glycerol: step 1/1. Activated by phosphorylation and inhibited by fructose 1,6-bisphosphate (FBP). Functionally, key enzyme in the regulation of glycerol uptake and metabolism. Catalyzes the phosphorylation of glycerol to yield sn-glycerol 3-phosphate. This Clostridium botulinum (strain 657 / Type Ba4) protein is Glycerol kinase.